The sequence spans 287 residues: uncharacterized protein (287 aa).

In terms of domain architecture, ATP-grasp spans 115 to 287 (SLLSKETIKS…KKFLKKKLIS (173 aa)).

This is an uncharacterized protein from Mycoplasma genitalium (strain ATCC 33530 / DSM 19775 / NCTC 10195 / G37) (Mycoplasmoides genitalium).